We begin with the raw amino-acid sequence, 248 residues long: ATP synthase subunit a, chloroplastic (248 aa).

Helical transmembrane passes span 38–58, 96–116, 135–155, 200–220, and 221–241; these read QVLI…TLAV, VPFI…GALF, INTT…AGFT, LVVA…VMFL, and GLFT…AYIG.

It belongs to the ATPase A chain family. F-type ATPases have 2 components, CF(1) - the catalytic core - and CF(0) - the membrane proton channel. CF(1) has five subunits: alpha(3), beta(3), gamma(1), delta(1), epsilon(1). CF(0) has four main subunits: a, b, b' and c.

The protein resides in the plastid. It is found in the chloroplast thylakoid membrane. In terms of biological role, key component of the proton channel; it plays a direct role in the translocation of protons across the membrane. The chain is ATP synthase subunit a, chloroplastic from Cryptomeria japonica (Japanese cedar).